The primary structure comprises 352 residues: Elongation factor Ts (352 aa).

Residues 81–84 (TDFV) form an involved in Mg(2+) ion dislocation from EF-Tu region.

It belongs to the EF-Ts family.

The protein resides in the cytoplasm. Associates with the EF-Tu.GDP complex and induces the exchange of GDP to GTP. It remains bound to the aminoacyl-tRNA.EF-Tu.GTP complex up to the GTP hydrolysis stage on the ribosome. This Campylobacter hominis (strain ATCC BAA-381 / DSM 21671 / CCUG 45161 / LMG 19568 / NCTC 13146 / CH001A) protein is Elongation factor Ts.